Reading from the N-terminus, the 318-residue chain is MNLNYLDFEQPIAVLEGKIQELQLVGTDNDLNISEEIDRLKEKSTKLTENIYSSLTPWQIVQVARHPQRPYSADYIARMFDDWDELHGDRHFGDDKAIIGGVGRLNGRPVMVIGEEKGRSVKEKVERNFGMPKPEGYRKALRLMEMAERFKMPVLTLIDTPGAYPGIDSEERGISESIAQNLAVMSRLRTPIICTVIGEGSSGGALAIGVGDYLNMLQYSTYFVISPEGCANIIWKTVEKAPLAAEAMGVTSSVLEELGIVDETIAEPLGGAHRDIDTMAEKLKTRLSEQLDQLVAEDMDSLLERRYKRLMSYGNAAS.

Positions 36-293 (EIDRLKEKST…KTRLSEQLDQ (258 aa)) constitute a CoA carboxyltransferase C-terminal domain.

It belongs to the AccA family. In terms of assembly, acetyl-CoA carboxylase is a heterohexamer composed of biotin carboxyl carrier protein (AccB), biotin carboxylase (AccC) and two subunits each of ACCase subunit alpha (AccA) and ACCase subunit beta (AccD).

The protein localises to the cytoplasm. The enzyme catalyses N(6)-carboxybiotinyl-L-lysyl-[protein] + acetyl-CoA = N(6)-biotinyl-L-lysyl-[protein] + malonyl-CoA. It participates in lipid metabolism; malonyl-CoA biosynthesis; malonyl-CoA from acetyl-CoA: step 1/1. Its function is as follows. Component of the acetyl coenzyme A carboxylase (ACC) complex. First, biotin carboxylase catalyzes the carboxylation of biotin on its carrier protein (BCCP) and then the CO(2) group is transferred by the carboxyltransferase to acetyl-CoA to form malonyl-CoA. The chain is Acetyl-coenzyme A carboxylase carboxyl transferase subunit alpha from Teredinibacter turnerae (strain ATCC 39867 / T7901).